We begin with the raw amino-acid sequence, 591 residues long: Aspartate--tRNA(Asp/Asn) ligase (591 aa).

Glu-174 is an L-aspartate binding site. The interval 198–201 (QLFK) is aspartate. Arg-220 is an L-aspartate binding site. Residues 220–222 (RDE) and Gln-229 contribute to the ATP site. His-450 contacts L-aspartate. Glu-483 contributes to the ATP binding site. Arg-490 lines the L-aspartate pocket. 535–538 (GLDR) is an ATP binding site.

It belongs to the class-II aminoacyl-tRNA synthetase family. Type 1 subfamily. Homodimer.

The protein resides in the cytoplasm. It carries out the reaction tRNA(Asx) + L-aspartate + ATP = L-aspartyl-tRNA(Asx) + AMP + diphosphate. In terms of biological role, aspartyl-tRNA synthetase with relaxed tRNA specificity since it is able to aspartylate not only its cognate tRNA(Asp) but also tRNA(Asn). Reaction proceeds in two steps: L-aspartate is first activated by ATP to form Asp-AMP and then transferred to the acceptor end of tRNA(Asp/Asn). This Ectopseudomonas mendocina (strain ymp) (Pseudomonas mendocina) protein is Aspartate--tRNA(Asp/Asn) ligase.